The following is a 309-amino-acid chain: Homoserine kinase (309 aa).

91-101 serves as a coordination point for ATP; sequence PIGSGLGSSAC.

This sequence belongs to the GHMP kinase family. Homoserine kinase subfamily.

The protein resides in the cytoplasm. It carries out the reaction L-homoserine + ATP = O-phospho-L-homoserine + ADP + H(+). It functions in the pathway amino-acid biosynthesis; L-threonine biosynthesis; L-threonine from L-aspartate: step 4/5. Functionally, catalyzes the ATP-dependent phosphorylation of L-homoserine to L-homoserine phosphate. The sequence is that of Homoserine kinase from Citrobacter koseri (strain ATCC BAA-895 / CDC 4225-83 / SGSC4696).